Here is a 616-residue protein sequence, read N- to C-terminus: Chaperone protein HscA (616 aa).

It belongs to the heat shock protein 70 family.

Chaperone involved in the maturation of iron-sulfur cluster-containing proteins. Has a low intrinsic ATPase activity which is markedly stimulated by HscB. Involved in the maturation of IscU. This chain is Chaperone protein HscA, found in Salmonella paratyphi C (strain RKS4594).